A 501-amino-acid polypeptide reads, in one-letter code: Lysine--tRNA ligase (501 aa).

Positions 402 and 409 each coordinate Mg(2+).

It belongs to the class-II aminoacyl-tRNA synthetase family. In terms of assembly, homodimer. Mg(2+) serves as cofactor.

Its subcellular location is the cytoplasm. The enzyme catalyses tRNA(Lys) + L-lysine + ATP = L-lysyl-tRNA(Lys) + AMP + diphosphate. The chain is Lysine--tRNA ligase from Helicobacter pylori (strain G27).